We begin with the raw amino-acid sequence, 479 residues long: Aldehyde dehydrogenase family 3 member B2 (479 aa).

Residues glutamate 223 and cysteine 257 contribute to the active site. Cysteine 476 bears the Cysteine methyl ester mark. The S-geranylgeranyl cysteine moiety is linked to residue cysteine 476. A propeptide spans 477–479 (removed in mature form); it reads TLL.

This sequence belongs to the aldehyde dehydrogenase family. Post-translationally, geranylgeranylation is important for localization to lipid droplets and enzyme activity. Expressed in testis, white adipose tissue, lung, small intestine, kidney, spleen and liver.

Its subcellular location is the lipid droplet. It carries out the reaction an aldehyde + NAD(+) + H2O = a carboxylate + NADH + 2 H(+). The enzyme catalyses a long-chain fatty aldehyde + NAD(+) + H2O = a long-chain fatty acid + NADH + 2 H(+). It catalyses the reaction a medium-chain fatty aldehyde + NAD(+) + H2O = a medium-chain fatty acid + NADH + 2 H(+). The catalysed reaction is hexadecanoate + NADH + 2 H(+) = hexadecanal + NAD(+) + H2O. It carries out the reaction octanal + NAD(+) + H2O = octanoate + NADH + 2 H(+). It functions in the pathway alcohol metabolism; ethanol degradation; acetate from ethanol: step 2/2. Its function is as follows. Oxidizes medium and long chain fatty aldehydes in lipid droplets into non-toxic fatty acids. The polypeptide is Aldehyde dehydrogenase family 3 member B2 (Mus musculus (Mouse)).